The following is a 214-amino-acid chain: Leucyl/phenylalanyl-tRNA--protein transferase (214 aa).

The protein belongs to the L/F-transferase family.

The protein resides in the cytoplasm. The enzyme catalyses N-terminal L-lysyl-[protein] + L-leucyl-tRNA(Leu) = N-terminal L-leucyl-L-lysyl-[protein] + tRNA(Leu) + H(+). It carries out the reaction N-terminal L-arginyl-[protein] + L-leucyl-tRNA(Leu) = N-terminal L-leucyl-L-arginyl-[protein] + tRNA(Leu) + H(+). The catalysed reaction is L-phenylalanyl-tRNA(Phe) + an N-terminal L-alpha-aminoacyl-[protein] = an N-terminal L-phenylalanyl-L-alpha-aminoacyl-[protein] + tRNA(Phe). Functions in the N-end rule pathway of protein degradation where it conjugates Leu, Phe and, less efficiently, Met from aminoacyl-tRNAs to the N-termini of proteins containing an N-terminal arginine or lysine. The protein is Leucyl/phenylalanyl-tRNA--protein transferase of Cereibacter sphaeroides (strain ATCC 17029 / ATH 2.4.9) (Rhodobacter sphaeroides).